The sequence spans 151 residues: Transcriptional repressor NrdR (151 aa).

Residues 3–34 (CPHCGNCDDKVMESRTLAQGDCIRRRRECLAC) fold into a zinc finger. One can recognise an ATP-cone domain in the interval 49–141 (FMVIKKDGRR…VYKQFSNLDE (93 aa)).

This sequence belongs to the NrdR family. Requires Zn(2+) as cofactor.

In terms of biological role, negatively regulates transcription of bacterial ribonucleotide reductase nrd genes and operons by binding to NrdR-boxes. The polypeptide is Transcriptional repressor NrdR (Treponema denticola (strain ATCC 35405 / DSM 14222 / CIP 103919 / JCM 8153 / KCTC 15104)).